Consider the following 400-residue polypeptide: CCA-adding enzyme (400 aa).

Residues G28 and R31 each coordinate ATP. G28 and R31 together coordinate CTP. Mg(2+) is bound by residues D41 and D43. ATP contacts are provided by R112, D155, R158, R161, and R164. Positions 112, 155, 158, 161, and 164 each coordinate CTP.

The protein belongs to the tRNA nucleotidyltransferase/poly(A) polymerase family. Bacterial CCA-adding enzyme type 3 subfamily. As to quaternary structure, homodimer. Requires Mg(2+) as cofactor.

It catalyses the reaction a tRNA precursor + 2 CTP + ATP = a tRNA with a 3' CCA end + 3 diphosphate. The catalysed reaction is a tRNA with a 3' CCA end + 2 CTP + ATP = a tRNA with a 3' CCACCA end + 3 diphosphate. Functionally, catalyzes the addition and repair of the essential 3'-terminal CCA sequence in tRNAs without using a nucleic acid template. Adds these three nucleotides in the order of C, C, and A to the tRNA nucleotide-73, using CTP and ATP as substrates and producing inorganic pyrophosphate. tRNA 3'-terminal CCA addition is required both for tRNA processing and repair. Also involved in tRNA surveillance by mediating tandem CCA addition to generate a CCACCA at the 3' terminus of unstable tRNAs. While stable tRNAs receive only 3'-terminal CCA, unstable tRNAs are marked with CCACCA and rapidly degraded. The polypeptide is CCA-adding enzyme (Staphylococcus aureus (strain bovine RF122 / ET3-1)).